A 248-amino-acid polypeptide reads, in one-letter code: Anamorsin homolog (248 aa).

An N-terminal SAM-like domain region spans residues 4 to 129; that stretch reads FKGLQKSLYI…ETGSSARLSF (126 aa). The linker stretch occupies residues 130-161; it reads AKKNANAVNVWKISGDDEELIDEEELLDEEDK. The [2Fe-2S] cluster site is built by Cys-172, Cys-181, Cys-184, and Cys-186. The interval 172-186 is fe-S binding site A; sequence CSTTGKRKACKNCSC. [4Fe-4S] cluster contacts are provided by Cys-209, Cys-212, Cys-220, and Cys-223. Short sequence motifs (cx2C motif) lie at residues 209–212 and 220–223; these read CGNC and CSTC. Positions 209–223 are fe-S binding site B; it reads CGNCYLGDAFRCSTC.

It belongs to the anamorsin family. Monomer. [2Fe-2S] cluster is required as a cofactor. [4Fe-4S] cluster serves as cofactor.

It localises to the cytoplasm. The protein localises to the mitochondrion intermembrane space. In terms of biological role, component of the cytosolic iron-sulfur (Fe-S) protein assembly (CIA) machinery. Required for the maturation of extramitochondrial Fe-S proteins. Part of an electron transfer chain functioning in an early step of cytosolic Fe-S biogenesis, facilitating the de novo assembly of a [4Fe-4S] cluster on the cytosolic Fe-S scaffold complex. Electrons are transferred from NADPH via a FAD- and FMN-containing diflavin oxidoreductase. Together with the diflavin oxidoreductase, also required for the assembly of the diferric tyrosyl radical cofactor of ribonucleotide reductase (RNR), probably by providing electrons for reduction during radical cofactor maturation in the catalytic small subunit. The polypeptide is Anamorsin homolog (Drosophila simulans (Fruit fly)).